A 979-amino-acid polypeptide reads, in one-letter code: DNA ligase 4 (979 aa).

Positions 1 to 39 (MDSDEIMPDEEHPNVPVGDEESDIDEKYPNRPRNHSPTL) are disordered. The ATP site is built by glutamate 320, lysine 322, leucine 323, arginine 327, glutamate 389, phenylalanine 430, glutamate 490, lysine 495, lysine 512, and lysine 514. Lysine 322 acts as the N6-AMP-lysine intermediate in catalysis. Glutamate 389 is a binding site for Mg(2+). Glutamate 490 serves as a coordination point for Mg(2+). BRCT domains lie at 721–814 (PSGH…PDFL) and 867–965 (LQES…RFQP).

Belongs to the ATP-dependent DNA ligase family. Mg(2+) is required as a cofactor.

It is found in the nucleus. The enzyme catalyses ATP + (deoxyribonucleotide)n-3'-hydroxyl + 5'-phospho-(deoxyribonucleotide)m = (deoxyribonucleotide)n+m + AMP + diphosphate.. Its function is as follows. DNA ligase involved in DNA non-homologous end joining (NHEJ); required for double-strand break (DSB) repair. This chain is DNA ligase 4 (lig4), found in Aspergillus fumigatus (strain ATCC MYA-4609 / CBS 101355 / FGSC A1100 / Af293) (Neosartorya fumigata).